The chain runs to 118 residues: Ribosome-binding factor A (118 aa).

It belongs to the RbfA family. In terms of assembly, monomer. Binds 30S ribosomal subunits, but not 50S ribosomal subunits or 70S ribosomes.

The protein localises to the cytoplasm. Its function is as follows. One of several proteins that assist in the late maturation steps of the functional core of the 30S ribosomal subunit. Associates with free 30S ribosomal subunits (but not with 30S subunits that are part of 70S ribosomes or polysomes). Required for efficient processing of 16S rRNA. May interact with the 5'-terminal helix region of 16S rRNA. In Dehalococcoides mccartyi (strain ATCC BAA-2100 / JCM 16839 / KCTC 5957 / BAV1), this protein is Ribosome-binding factor A.